The sequence spans 179 residues: MTRLEQIYAEKVAPELKKEFGYTSSMQIPRLSFVSLNMGLGEASNNNKLIEEAVVELTAIAGQKAVITRARKSIAAFKLREGMPVGCRVTLRRDRMWDYLDKLMNFALPRVRDFRGVPDRGFDGRGNFTLGIREHSIFPEINVDRVEHVKGMNVTIVTTATADKEGKMLLDLLGMPFKK.

The protein belongs to the universal ribosomal protein uL5 family. Part of the 50S ribosomal subunit; part of the 5S rRNA/L5/L18/L25 subcomplex. Contacts the 5S rRNA and the P site tRNA. Forms a bridge to the 30S subunit in the 70S ribosome.

In terms of biological role, this is one of the proteins that bind and probably mediate the attachment of the 5S RNA into the large ribosomal subunit, where it forms part of the central protuberance. In the 70S ribosome it contacts protein S13 of the 30S subunit (bridge B1b), connecting the 2 subunits; this bridge is implicated in subunit movement. Contacts the P site tRNA; the 5S rRNA and some of its associated proteins might help stabilize positioning of ribosome-bound tRNAs. This chain is Large ribosomal subunit protein uL5, found in Solidesulfovibrio magneticus (strain ATCC 700980 / DSM 13731 / RS-1) (Desulfovibrio magneticus).